Consider the following 241-residue polypeptide: DNA repair protein RecO (241 aa).

It belongs to the RecO family.

Involved in DNA repair and RecF pathway recombination. The sequence is that of DNA repair protein RecO from Dinoroseobacter shibae (strain DSM 16493 / NCIMB 14021 / DFL 12).